The sequence spans 697 residues: Protein arginine N-methyltransferase 7 (697 aa).

2 consecutive SAM-dependent MTase PRMT-type domains span residues Q14–W357 and E366–K697.

It belongs to the class I-like SAM-binding methyltransferase superfamily. Protein arginine N-methyltransferase family. PRMT7 subfamily.

Essential arginine methyltransferase that can both catalyze the formation of omega-N monomethylarginine (MMA) and symmetrical dimethylarginine (sDMA). Specifically mediates the symmetrical dimethylation of arginine residues in the small nuclear ribonucleoproteins SmD1 and SmD3. The protein is Protein arginine N-methyltransferase 7 (Art7) of Drosophila virilis (Fruit fly).